Consider the following 256-residue polypeptide: 4-hydroxy-tetrahydrodipicolinate reductase (256 aa).

8 to 13 is a binding site for NAD(+); the sequence is GASGKM. Lys-36 serves as a coordination point for NADP(+). NAD(+) contacts are provided by residues 87–89 and 111–114; these read GTT and ATNM. Catalysis depends on His-143, which acts as the Proton donor/acceptor. His-144 serves as a coordination point for (S)-2,3,4,5-tetrahydrodipicolinate. The active-site Proton donor is Lys-147. 153-154 serves as a coordination point for (S)-2,3,4,5-tetrahydrodipicolinate; it reads GT.

Belongs to the DapB family.

Its subcellular location is the cytoplasm. The enzyme catalyses (S)-2,3,4,5-tetrahydrodipicolinate + NAD(+) + H2O = (2S,4S)-4-hydroxy-2,3,4,5-tetrahydrodipicolinate + NADH + H(+). It catalyses the reaction (S)-2,3,4,5-tetrahydrodipicolinate + NADP(+) + H2O = (2S,4S)-4-hydroxy-2,3,4,5-tetrahydrodipicolinate + NADPH + H(+). Its pathway is amino-acid biosynthesis; L-lysine biosynthesis via DAP pathway; (S)-tetrahydrodipicolinate from L-aspartate: step 4/4. In terms of biological role, catalyzes the conversion of 4-hydroxy-tetrahydrodipicolinate (HTPA) to tetrahydrodipicolinate. This is 4-hydroxy-tetrahydrodipicolinate reductase from Campylobacter concisus (strain 13826).